Consider the following 420-residue polypeptide: 20-oxo-5-O-mycaminosyltylactone 23-monooxygenase (420 aa).

The segment at 1–28 (MSSSGDARPSQKGILLPAARANDTDEAA) is disordered. Residues His118, Arg122, Arg311, His367, and Cys369 each coordinate heme.

This sequence belongs to the cytochrome P450 family.

It catalyses the reaction 20-oxo-5-O-beta-D-mycaminosyltylonolide + 2 reduced [2Fe-2S]-[ferredoxin] + O2 + 2 H(+) = 5-O-beta-D-mycaminosyltylonolide + 2 oxidized [2Fe-2S]-[ferredoxin] + H2O. It participates in antibiotic biosynthesis; tylosin biosynthesis. Involved in the biosynthesis of the complex macrolide antibiotic tylosin. Catalyzes the hydroxylation of 20-oxo-5-O-beta-mycaminosyltylactone at the C-23 position to yield 5-O-beta-mycaminosyltylonolide. The protein is 20-oxo-5-O-mycaminosyltylactone 23-monooxygenase of Streptomyces fradiae (Streptomyces roseoflavus).